A 185-amino-acid chain; its full sequence is uncharacterized protein (185 aa).

Residues M1–F24 form the signal peptide. The helical transmembrane segment at V50–L70 threads the bilayer. Basic and acidic residues predominate over residues E96 to T113. Residues E96–P185 form a disordered region. The segment covering V114–Q126 has biased composition (polar residues). The span at R127–E138 shows a compositional bias: basic and acidic residues. Residues P139–S155 show a composition bias toward pro residues.

It localises to the host membrane. This is an uncharacterized protein from Colorado tick fever virus (strain USA/Florio N-7180) (CTFV).